A 486-amino-acid chain; its full sequence is Iron-sulfur cluster assembly SufBD family protein ycf24 (486 aa).

It belongs to the iron-sulfur cluster assembly SufBD family.

The protein resides in the plastid. Its subcellular location is the chloroplast. The protein is Iron-sulfur cluster assembly SufBD family protein ycf24 (ycf24) of Trieres chinensis (Marine centric diatom).